A 527-amino-acid polypeptide reads, in one-letter code: Catalase (527 aa).

A compositionally biased stretch (basic and acidic residues) spans 1–22 (MADSRDPASDQMKLWKEQRAAQ). The segment at 1–34 (MADSRDPASDQMKLWKEQRAAQKPDVLTTGGGNP) is disordered. Residue alanine 2 is modified to N-acetylalanine. Serine 9 carries the post-translational modification Phosphoserine. N6-succinyllysine is present on lysine 13. Catalysis depends on residues histidine 75 and asparagine 148. 4 residues coordinate NADP(+): histidine 194, serine 201, arginine 203, and asparagine 213. Lysine 221 carries the N6-succinyllysine modification. At lysine 233 the chain carries N6-acetyllysine. 3 residues coordinate NADP(+): lysine 237, tryptophan 303, and histidine 305. Tyrosine 358 contributes to the heme binding site. Phosphoserine is present on residues serine 422 and serine 434. N6-acetyllysine; alternate occurs at positions 449 and 480. Lysine 449 and lysine 480 each carry N6-succinyllysine; alternate. N6-acetyllysine is present on lysine 499. Residue threonine 511 is modified to Phosphothreonine. A Phosphoserine modification is found at serine 517. The Microbody targeting signal; atypical motif lies at 524 to 527 (KANL).

It belongs to the catalase family. In terms of assembly, homotetramer. Interacts (via microbody targeting signal) with PEX5, monomeric form interacts with PEX5, leading to its translocation into peroxisomes. Heme serves as cofactor. NADP(+) is required as a cofactor.

The protein resides in the peroxisome matrix. The catalysed reaction is 2 H2O2 = O2 + 2 H2O. Its function is as follows. Catalyzes the degradation of hydrogen peroxide (H(2)O(2)) generated by peroxisomal oxidases to water and oxygen, thereby protecting cells from the toxic effects of hydrogen peroxide. Promotes growth of cells including T-cells, B-cells, myeloid leukemia cells, melanoma cells, mastocytoma cells and normal and transformed fibroblast cells. The sequence is that of Catalase (CAT) from Canis lupus familiaris (Dog).